The following is a 258-amino-acid chain: Trans-aconitate 2-methyltransferase (258 aa).

It belongs to the methyltransferase superfamily. Tam family.

It is found in the cytoplasm. It catalyses the reaction trans-aconitate + S-adenosyl-L-methionine = (E)-3-(methoxycarbonyl)pent-2-enedioate + S-adenosyl-L-homocysteine. Catalyzes the S-adenosylmethionine monomethyl esterification of trans-aconitate. The protein is Trans-aconitate 2-methyltransferase of Yersinia pseudotuberculosis serotype O:1b (strain IP 31758).